A 314-amino-acid chain; its full sequence is Methionyl-tRNA formyltransferase (314 aa).

109 to 112 (SLLP) is a (6S)-5,6,7,8-tetrahydrofolate binding site.

The protein belongs to the Fmt family.

The enzyme catalyses L-methionyl-tRNA(fMet) + (6R)-10-formyltetrahydrofolate = N-formyl-L-methionyl-tRNA(fMet) + (6S)-5,6,7,8-tetrahydrofolate + H(+). Its function is as follows. Attaches a formyl group to the free amino group of methionyl-tRNA(fMet). The formyl group appears to play a dual role in the initiator identity of N-formylmethionyl-tRNA by promoting its recognition by IF2 and preventing the misappropriation of this tRNA by the elongation apparatus. The protein is Methionyl-tRNA formyltransferase of Syntrophomonas wolfei subsp. wolfei (strain DSM 2245B / Goettingen).